Reading from the N-terminus, the 320-residue chain is MQTRNAFSYIKEEITRSISVLLVIYIIIRAPISNAYPIFAQQGYENPREATGRIVCANCHLANKPVDIEVPQTVLPDTVFEAVVRIPYDMQVKQVLANGKRGALNVGAVLILPEGFELAPTDRISPEIKEKMGNLSFQSYRPTKKNILVVGPVPGQKYSEITFPILSPDPATNRDVNFLKYPIYVGGNRGRGQIYPDGSKSNNNVYNATTSGIINKIIRKDKGGYEITIVDASDGREVIDIIPPGPELLVSEGESIKLDQPLTSNPNVGGFGQGDAEIVLQDPLRVQGLLFFLASIIFAQIFLVLKKKQFEKVQLSEMNF.

Residues 1 to 35 (MQTRNAFSYIKEEITRSISVLLVIYIIIRAPISNA) form the signal peptide. Residues Tyr36, Cys56, Cys59, and His60 each contribute to the heme site. The chain crosses the membrane as a helical span at residues 286–305 (VQGLLFFLASIIFAQIFLVL).

It belongs to the cytochrome f family. As to quaternary structure, the 4 large subunits of the cytochrome b6-f complex are cytochrome b6, subunit IV (17 kDa polypeptide, petD), cytochrome f and the Rieske protein, while the 4 small subunits are PetG, PetL, PetM and PetN. The complex functions as a dimer. It depends on heme as a cofactor.

The protein resides in the plastid. The protein localises to the chloroplast thylakoid membrane. Component of the cytochrome b6-f complex, which mediates electron transfer between photosystem II (PSII) and photosystem I (PSI), cyclic electron flow around PSI, and state transitions. The protein is Cytochrome f of Lotus japonicus (Lotus corniculatus var. japonicus).